A 1070-amino-acid chain; its full sequence is Carbamoyl phosphate synthase large chain (1070 aa).

The carboxyphosphate synthetic domain stretch occupies residues 1 to 401 (MPKRDDIKTI…ALLKAVRSLE (401 aa)). ATP-binding residues include Arg-129, Arg-169, Gly-175, Gly-176, Lys-208, Ile-210, Glu-215, Gly-241, Ile-242, His-243, Gln-284, and Glu-298. The ATP-grasp 1 domain occupies 133–327 (RDLMNELGEP…IAKLAAKIAV (195 aa)). Gln-284, Glu-298, and Asn-300 together coordinate Mg(2+). Mn(2+) is bound by residues Gln-284, Glu-298, and Asn-300. An oligomerization domain region spans residues 402–546 (IGADHLLLEE…YSTYEEENES (145 aa)). Positions 547–929 (TRSAKESVIV…ALYKGFVASG (383 aa)) are carbamoyl phosphate synthetic domain. One can recognise an ATP-grasp 2 domain in the interval 671 to 861 (EKALGILQIP…MANVATRVIL (191 aa)). Arg-707, Arg-746, Val-748, Glu-752, Gly-777, Val-778, His-779, Ser-780, Gln-820, and Glu-832 together coordinate ATP. Residues Gln-820, Glu-832, and Asn-834 each contribute to the Mg(2+) site. Gln-820, Glu-832, and Asn-834 together coordinate Mn(2+). The MGS-like domain occupies 930-1070 (TTMHDYGTVL…SEVKQPKARV (141 aa)). Residues 930–1070 (TTMHDYGTVL…SEVKQPKARV (141 aa)) are allosteric domain.

The protein belongs to the CarB family. Composed of two chains; the small (or glutamine) chain promotes the hydrolysis of glutamine to ammonia, which is used by the large (or ammonia) chain to synthesize carbamoyl phosphate. Tetramer of heterodimers (alpha,beta)4. Mg(2+) is required as a cofactor. Mn(2+) serves as cofactor.

It catalyses the reaction hydrogencarbonate + L-glutamine + 2 ATP + H2O = carbamoyl phosphate + L-glutamate + 2 ADP + phosphate + 2 H(+). The catalysed reaction is hydrogencarbonate + NH4(+) + 2 ATP = carbamoyl phosphate + 2 ADP + phosphate + 2 H(+). Its pathway is amino-acid biosynthesis; L-arginine biosynthesis; carbamoyl phosphate from bicarbonate: step 1/1. The protein operates within pyrimidine metabolism; UMP biosynthesis via de novo pathway; (S)-dihydroorotate from bicarbonate: step 1/3. Large subunit of the glutamine-dependent carbamoyl phosphate synthetase (CPSase). CPSase catalyzes the formation of carbamoyl phosphate from the ammonia moiety of glutamine, carbonate, and phosphate donated by ATP, constituting the first step of 2 biosynthetic pathways, one leading to arginine and/or urea and the other to pyrimidine nucleotides. The large subunit (synthetase) binds the substrates ammonia (free or transferred from glutamine from the small subunit), hydrogencarbonate and ATP and carries out an ATP-coupled ligase reaction, activating hydrogencarbonate by forming carboxy phosphate which reacts with ammonia to form carbamoyl phosphate. The polypeptide is Carbamoyl phosphate synthase large chain (Listeria monocytogenes serotype 4b (strain CLIP80459)).